Here is a 100-residue protein sequence, read N- to C-terminus: NADH-quinone oxidoreductase subunit K (100 aa).

3 helical membrane-spanning segments follow: residues 4–24, 28–48, and 60–80; these read MQHG…GLLI, LIFM…AWVV, and IFYL…LALL.

This sequence belongs to the complex I subunit 4L family. NDH-1 is composed of 13 different subunits. Subunits NuoA, H, J, K, L, M, N constitute the membrane sector of the complex.

It is found in the cell membrane. The enzyme catalyses a quinone + NADH + 5 H(+)(in) = a quinol + NAD(+) + 4 H(+)(out). NDH-1 shuttles electrons from NADH, via FMN and iron-sulfur (Fe-S) centers, to quinones in the respiratory chain. The immediate electron acceptor for the enzyme in this species is believed to be ubiquinone. Couples the redox reaction to proton translocation (for every two electrons transferred, four hydrogen ions are translocated across the cytoplasmic membrane), and thus conserves the redox energy in a proton gradient. This is NADH-quinone oxidoreductase subunit K from Hamiltonella defensa subsp. Acyrthosiphon pisum (strain 5AT).